The sequence spans 430 residues: tRNA(Ile)-lysidine synthase (430 aa).

21 to 26 (SGGLDS) provides a ligand contact to ATP.

Belongs to the tRNA(Ile)-lysidine synthase family.

The protein localises to the cytoplasm. The catalysed reaction is cytidine(34) in tRNA(Ile2) + L-lysine + ATP = lysidine(34) in tRNA(Ile2) + AMP + diphosphate + H(+). Its function is as follows. Ligates lysine onto the cytidine present at position 34 of the AUA codon-specific tRNA(Ile) that contains the anticodon CAU, in an ATP-dependent manner. Cytidine is converted to lysidine, thus changing the amino acid specificity of the tRNA from methionine to isoleucine. The protein is tRNA(Ile)-lysidine synthase of Salmonella heidelberg (strain SL476).